A 205-amino-acid chain; its full sequence is Inactive ribonuclease-like protein 9 (205 aa).

Positions 1–26 (MMRTLITIHPLPLLLLLQQLLQPVQF) are cleaved as a signal peptide. 3 disulfide bridges follow: cysteine 98-cysteine 153, cysteine 116-cysteine 168, and cysteine 123-cysteine 130. N-linked (GlcNAc...) asparagine glycosylation is found at asparagine 131 and asparagine 143.

It belongs to the pancreatic ribonuclease family.

The protein resides in the secreted. In terms of biological role, does not exhibit any ribonuclease activity. The polypeptide is Inactive ribonuclease-like protein 9 (RNASE9) (Gorilla gorilla gorilla (Western lowland gorilla)).